The following is a 165-amino-acid chain: 16S rRNA aminocarboxypropyltransferase (165 aa).

S-adenosyl-L-methionine is bound by residues Thr-17, Leu-62, Leu-83, and Thr-102.

This sequence belongs to the TDD superfamily. TSR3 family.

It localises to the cytoplasm. It catalyses the reaction an N(1)-methylpseudouridine in rRNA + S-adenosyl-L-methionine = N(1)-methyl-N(3)-[(3S)-3-amino-3-carboxypropyl]pseudouridine in rRNA + S-methyl-5'-thioadenosine + H(+). Functionally, aminocarboxypropyltransferase that catalyzes the aminocarboxypropyl transfer on pseudouridine corresponding to position 914 in M.jannaschii 16S rRNA. It constitutes the last step in biosynthesis of the hypermodified N1-methyl-N3-(3-amino-3-carboxypropyl) pseudouridine (m1acp3-Psi). This is 16S rRNA aminocarboxypropyltransferase from Halobacterium salinarum (strain ATCC 700922 / JCM 11081 / NRC-1) (Halobacterium halobium).